A 215-amino-acid chain; its full sequence is LexA repressor (215 aa).

The H-T-H motif DNA-binding region spans 28-48 (RAEIAAELGFSSPNAAEEHLR). Residues serine 133 and lysine 170 each act as for autocatalytic cleavage activity in the active site.

This sequence belongs to the peptidase S24 family. In terms of assembly, homodimer.

It catalyses the reaction Hydrolysis of Ala-|-Gly bond in repressor LexA.. In terms of biological role, represses a number of genes involved in the response to DNA damage (SOS response), including recA and lexA. In the presence of single-stranded DNA, RecA interacts with LexA causing an autocatalytic cleavage which disrupts the DNA-binding part of LexA, leading to derepression of the SOS regulon and eventually DNA repair. The polypeptide is LexA repressor (Burkholderia cenocepacia (strain HI2424)).